The chain runs to 55 residues: Large ribosomal subunit protein bL33 (55 aa).

Positions 1–11 (MAKSGRDKIKL) are enriched in basic and acidic residues. Residues 1–27 (MAKSGRDKIKLESTAGTGHFYTTTKNK) form a disordered region. Residues 14-24 (TAGTGHFYTTT) show a composition bias toward polar residues.

This sequence belongs to the bacterial ribosomal protein bL33 family.

The polypeptide is Large ribosomal subunit protein bL33 (Herminiimonas arsenicoxydans).